The sequence spans 277 residues: MEPKAFVEIMRPHNCILAGIVGILGSLVAYEGIPPVQKLILIFLVVYFGCSAGNTINDYFDVEIDKINRPNRPIPRGAITRKAAFYYGVLQYFIGLIIALLLGWSAFLFALGAYFLTFVYAWKLKPLPFIGNVTVALLTAATPIYGAVGVGRIDLAGYLAICAFLVNVSREIMKDIEDFEGDKRLGARTLPIMIGKKKSGIIASIFGFLTIISSFLPVKVGIGLGYLPIIIVDIMIAKASIDVLVNPEKAGKGQKILKFATFIAVISFLLGALTREV.

Helical transmembrane passes span 16 to 36 (ILAG…IPPV), 40 to 60 (ILIF…NDYF), 93 to 113 (FIGL…ALGA), 129 to 149 (FIGN…GAVG), 153 to 173 (IDLA…REIM), 199 to 218 (SGII…FLPV), 222 to 244 (IGLG…IDVL), and 253 to 273 (GQKI…LGAL).

This sequence belongs to the UbiA prenyltransferase family. DGGGP synthase subfamily. Requires Mg(2+) as cofactor.

It localises to the cell membrane. The enzyme catalyses sn-3-O-(geranylgeranyl)glycerol 1-phosphate + (2E,6E,10E)-geranylgeranyl diphosphate = 2,3-bis-O-(geranylgeranyl)-sn-glycerol 1-phosphate + diphosphate. Its pathway is membrane lipid metabolism; glycerophospholipid metabolism. In terms of biological role, prenyltransferase that catalyzes the transfer of the geranylgeranyl moiety of geranylgeranyl diphosphate (GGPP) to the C2 hydroxyl of (S)-3-O-geranylgeranylglyceryl phosphate (GGGP). This reaction is the second ether-bond-formation step in the biosynthesis of archaeal membrane lipids. The chain is Digeranylgeranylglyceryl phosphate synthase from Pyrococcus horikoshii (strain ATCC 700860 / DSM 12428 / JCM 9974 / NBRC 100139 / OT-3).